A 642-amino-acid chain; its full sequence is Kelch-like protein 17 (642 aa).

The segment at 1–53 (MQPRSERPAGRTQSPEHGSPGPGPEAPPPPPPQPPAPEAERTRPRQARPAAPM) is disordered. A compositionally biased stretch (pro residues) spans 21 to 37 (GPGPEAPPPPPPQPPAP). Residues 92 to 159 (CDIVLHVAAK…AYTAEIVVGE (68 aa)) enclose the BTB domain. The region spanning 194–296 (CLGIRGFADA…SRDFLLGHVD (103 aa)) is the BACK domain. Residues 289–641 (DFLLGHVDAE…SPTLSVSSTS (353 aa)) are interaction with F-actin. 6 Kelch repeats span residues 343 to 389 (VLFA…AVGN), 390 to 436 (RLYA…ALHG), 438 to 483 (LYSA…TLDG), 484 to 530 (NLYA…VLEG), 532 to 577 (LYVA…AMDG), and 578 to 624 (WLYA…VLEL). The interval 640–642 (TSL) is interaction with PDZK1.

In terms of assembly, interacts with F-actin; the interaction disrupts the F-actin structures and leads to marked changes of neuronal morphology. Component of a complex, composed of PDZK1, SYNGAP1, KLHL17 and NMDA receptors. Interacts directly with PDZK1 (via PDZ1 domain); the interaction is important for integrity of actin cytoskeleton structures in neurons. Interacts with DLG4 and SYNGAP1. Interacts (via kelch repeats) with GRIK2 (via C-terminus); the interaction targets GRIK2 for degradation via ubiquitin-proteasome pathway. Interacts with GRIK1. Interacts with (via BTB domain) CUL3; the interaction regulates surface GRIK2 expression.

Its subcellular location is the postsynaptic density. It localises to the synapse. It participates in protein modification; protein ubiquitination. In terms of biological role, substrate-recognition component of some cullin-RING-based BCR (BTB-CUL3-RBX1) E3 ubiquitin-protein ligase complexes. The BCR(KLHL17) complex mediates the ubiquitination and subsequent degradation of GLUR6. May play a role in the actin-based neuronal function. This chain is Kelch-like protein 17 (KLHL17), found in Homo sapiens (Human).